The following is a 3303-amino-acid chain: Protein unc-80 homolog (3303 aa).

Low complexity predominate over residues 1-37; sequence MVTNAAGTAATGGATSNTTNNNNLQTNNNSHGANNNN. The disordered stretch occupies residues 1-43; that stretch reads MVTNAAGTAATGGATSNTTNNNNLQTNNNSHGANNNNDDFDFD. Residues 202 to 222 form a helical membrane-spanning segment; that stretch reads LFSVPTITLFVYLFAPIIHHL. Disordered regions lie at residues 284-316, 361-422, 491-512, 526-546, 1036-1067, 1443-1563, and 1627-1671; these read LSAD…VSSP, LQQQ…SESI, LYQG…KDYI, AEEP…KKKR, FRRR…SERN, LHEP…DDTA, and VEPT…KDRI. Positions 361–377 are enriched in low complexity; that stretch reads LQQQQSQSRRGSRQSMN. Basic and acidic residues-rich tracts occupy residues 378–391 and 401–422; these read SRDK…KFEF and SMKE…SESI. Over residues 495–505 the composition is skewed to polar residues; the sequence is PGSNSRDSPGS. A compositionally biased stretch (polar residues) spans 1058–1067; it reads SDSTSSSERN. Basic residues predominate over residues 1490–1499; it reads FKRRSLKLRR. Over residues 1546 to 1556 the composition is skewed to polar residues; that stretch reads DDQQPESPTDS. A compositionally biased stretch (basic and acidic residues) spans 1660-1671; it reads KRKDSLSRKDRI. Transmembrane regions (helical) follow at residues 1969 to 1989, 2018 to 2038, and 2048 to 2068; these read VYEI…ALFL, LPQQ…MFYV, and LVGS…GIMF. Disordered regions lie at residues 2518–2550, 3003–3158, and 3170–3262; these read NGPY…FEEE, EEKR…FKAQ, and FRHS…YRDN. A compositionally biased stretch (basic and acidic residues) spans 3003-3018; sequence EEKRYDRESSEQKKSD. 2 stretches are compositionally biased toward polar residues: residues 3033–3053 and 3071–3106; these read QRPS…SHSH and PSDT…SQSG. Over residues 3124 to 3134 the composition is skewed to gly residues; that stretch reads SGHGSGGGIGT. Residues 3135 to 3152 are compositionally biased toward low complexity; it reads GAASAVPSHLSHSQSLQQ. Residues 3198-3217 are compositionally biased toward basic residues; the sequence is SRLQRSKAASRKTFRLKRSR. Positions 3226–3239 are enriched in polar residues; that stretch reads IVTSQEEQAPQAQA. Over residues 3246–3257 the composition is skewed to low complexity; that stretch reads SWDSVSQTSSTS.

It belongs to the unc-80 family. In terms of assembly, interacts with unc79 and na. Can interact with unc79 independently of na.

Its subcellular location is the membrane. Component of the na (narrow abdomen) sodium channel complex. In the circadian clock neurons it functions with na and unc79 to promote circadian rhythmicity. In Drosophila melanogaster (Fruit fly), this protein is Protein unc-80 homolog.